The primary structure comprises 673 residues: Xaa-Pro aminopeptidase 2 (673 aa).

The signal sequence occupies residues 1-21 (MAQACWGCYPWLVLICACAWG). Asn34, Asn48, and Asn64 each carry an N-linked (GlcNAc...) asparagine glycan. Arg115 is a binding site for substrate. Residues Asn277, Asn290, and Asn294 are each glycosylated (N-linked (GlcNAc...) asparagine). His429 is a substrate binding site. Mn(2+) is bound at residue Asp449. Zn(2+) is bound by residues Asp449, Asp460, and His523. Residues His523, His532, and Glu554 each contribute to the substrate site. Residues Glu554 and Glu568 each contribute to the Zn(2+) site. A lipid anchor (GPI-anchor amidated alanine) is attached at Ala649. Positions 650-673 (RAAPTTSLGSLMTVSALAILGWSV) are cleaved as a propeptide — removed in mature form.

Belongs to the peptidase M24B family. Homotrimer. Zn(2+) is required as a cofactor. Post-translationally, N-glycosylated. Kidney.

It is found in the cell membrane. The catalysed reaction is Release of any N-terminal amino acid, including proline, that is linked to proline, even from a dipeptide or tripeptide.. Inhibited by apstatin and the metal ion chelator EDTA. Potently inhibited by the converting enzyme inhibitors cilazaprilat; enalaprilat; L155,212; ramiprilat and YS 980. Also inhibited to a lesser extent by indolaprilat; quinaprilat; spiraprilat; captopril and zofenoprilat. Membrane-bound metalloprotease which catalyzes the removal of a penultimate prolyl residue from the N-termini of peptides, such as Arg-Pro-Pro. May play a role in the metabolism of the vasodilator bradykinin. The protein is Xaa-Pro aminopeptidase 2 (XPNPEP2) of Sus scrofa (Pig).